A 267-amino-acid chain; its full sequence is MNPMLNIAIRAARKAGNVIAKNYERRDAIESTQKGINDYVTNVDKASEAEIIEVIRKSYPDHTIITEETGAIEGKDSDVQWIIDPLDGTRNFMTGLPHFSVSIAVRVKNRTEVGVVYDPIRNELFTAVRGEGAKLNEVRLRVDSKREIQGSILATGFPFKQPKLMPAQFAMMNALIEDAADFRRTGSAALDLCYVASNRIDGYFEMGLKAWDCAAGDLIVREAGGLVCDFDAGNSYLRSGNIIAAPSRVIKEMLNKIRPCLGAEFNH.

Mg(2+) contacts are provided by Glu-67, Asp-84, and Leu-86. Residue Glu-67 participates in substrate binding. Residues 86 to 89 (LDGT), Arg-183, and Asp-212 each bind substrate.

Belongs to the inositol monophosphatase superfamily. As to quaternary structure, homodimer. The rRNA transcription and antitermination complex (rrnTAC) consists of RNA polymerase (RNAP), NusA, NusB, NusE (rpsJ), NusG, SubB, ribosomal protein S4, DNA and precursor rRNA; S4 is more flexible than other subunits. It depends on Mg(2+) as a cofactor.

It is found in the cytoplasm. The enzyme catalyses a myo-inositol phosphate + H2O = myo-inositol + phosphate. Functionally, part of the processive rRNA transcription and antitermination complex (rrnTAC). The complex forms an RNA-chaperone ring around the RNA exit tunnel of RNA polymerase (RNAP). It supports rapid transcription and antitermination of rRNA operons, cotranscriptional rRNA folding, and annealing of distal rRNA regions to allow correct ribosome biogenesis. This subunit may play a central role in organizing the structure. The chain is Nus factor SuhB (suhB) from Haemophilus influenzae (strain ATCC 51907 / DSM 11121 / KW20 / Rd).